The following is a 787-amino-acid chain: DNA ligase (787 aa).

NAD(+) is bound by residues 32 to 36, 81 to 82, and E121; these read DVEYD and SL. K123 (N6-AMP-lysine intermediate) is an active-site residue. NAD(+) contacts are provided by R144, E181, K297, and K321. C415, C418, C445, and C451 together coordinate Zn(2+). Residues 703-787 form the BRCT domain; it reads VEGLPLAGQT…RLTELGVAVD (85 aa).

The protein belongs to the NAD-dependent DNA ligase family. LigA subfamily. The cofactor is Mg(2+). Requires Mn(2+) as cofactor.

The catalysed reaction is NAD(+) + (deoxyribonucleotide)n-3'-hydroxyl + 5'-phospho-(deoxyribonucleotide)m = (deoxyribonucleotide)n+m + AMP + beta-nicotinamide D-nucleotide.. DNA ligase that catalyzes the formation of phosphodiester linkages between 5'-phosphoryl and 3'-hydroxyl groups in double-stranded DNA using NAD as a coenzyme and as the energy source for the reaction. It is essential for DNA replication and repair of damaged DNA. The chain is DNA ligase from Pseudomonas savastanoi pv. phaseolicola (strain 1448A / Race 6) (Pseudomonas syringae pv. phaseolicola (strain 1448A / Race 6)).